The chain runs to 424 residues: ATP-citrate synthase alpha chain protein 3 (424 aa).

Citrate is bound by residues N343, T345, and R376.

It belongs to the succinate/malate CoA ligase beta subunit family. Heterooctamer of 4 alpha and 4 beta chains.

It localises to the cytoplasm. Its subcellular location is the cytosol. It carries out the reaction oxaloacetate + acetyl-CoA + ADP + phosphate = citrate + ATP + CoA. Its function is as follows. ATP citrate-lyase is the primary enzyme responsible for the synthesis of cytosolic acetyl-CoA, used for the elongation of fatty acids and biosynthesis of isoprenoids, flavonoids and malonated derivatives. May supply substrate to the cytosolic acetyl-CoA carboxylase, which generates the malonyl-CoA used for the synthesis of a multitude of compounds, including very long chain fatty acids and flavonoids. Required for normal growth and development and elongation of C18 fatty acids to C20 to C24 fatty acids in seeds. In contrast to all known animal ACL enzymes having a homomeric structure, plant ACLs are composed of alpha and beta chains. In Arabidopsis thaliana (Mouse-ear cress), this protein is ATP-citrate synthase alpha chain protein 3 (ACLA-3).